The primary structure comprises 807 residues: Glycerol-3-phosphate acyltransferase (807 aa).

The HXXXXD motif signature appears at 308-313 (CHRSHM).

Belongs to the GPAT/DAPAT family.

It localises to the cell inner membrane. It catalyses the reaction sn-glycerol 3-phosphate + an acyl-CoA = a 1-acyl-sn-glycero-3-phosphate + CoA. It functions in the pathway phospholipid metabolism; CDP-diacylglycerol biosynthesis; CDP-diacylglycerol from sn-glycerol 3-phosphate: step 1/3. The sequence is that of Glycerol-3-phosphate acyltransferase from Shewanella sp. (strain ANA-3).